Here is a 284-residue protein sequence, read N- to C-terminus: 2-dehydro-3-deoxyphosphooctonate aldolase (284 aa).

It belongs to the KdsA family.

The protein localises to the cytoplasm. The catalysed reaction is D-arabinose 5-phosphate + phosphoenolpyruvate + H2O = 3-deoxy-alpha-D-manno-2-octulosonate-8-phosphate + phosphate. It participates in carbohydrate biosynthesis; 3-deoxy-D-manno-octulosonate biosynthesis; 3-deoxy-D-manno-octulosonate from D-ribulose 5-phosphate: step 2/3. Its pathway is bacterial outer membrane biogenesis; lipopolysaccharide biosynthesis. The polypeptide is 2-dehydro-3-deoxyphosphooctonate aldolase (Yersinia pseudotuberculosis serotype O:1b (strain IP 31758)).